The sequence spans 158 residues: MNTIAPNLDGKHLRIGIVQARFTNEIGSQMLKVCCRTLQELGVADENITVATVPGALEIPIALMNFASSEKFDALIAIGVVIRGETYHFELVANESGAGIGRVALDYNIPIANAVLTTENDAQAIERIGEKASDAAKVAVECANLVNLLLEEQFEDEE.

5-amino-6-(D-ribitylamino)uracil contacts are provided by residues Phe-22, 56–58 (ALE), and 80–82 (VVI). 85–86 (ET) contacts (2S)-2-hydroxy-3-oxobutyl phosphate. His-88 acts as the Proton donor in catalysis. Asn-113 lines the 5-amino-6-(D-ribitylamino)uracil pocket. Arg-127 contributes to the (2S)-2-hydroxy-3-oxobutyl phosphate binding site.

It belongs to the DMRL synthase family.

It carries out the reaction (2S)-2-hydroxy-3-oxobutyl phosphate + 5-amino-6-(D-ribitylamino)uracil = 6,7-dimethyl-8-(1-D-ribityl)lumazine + phosphate + 2 H2O + H(+). It participates in cofactor biosynthesis; riboflavin biosynthesis; riboflavin from 2-hydroxy-3-oxobutyl phosphate and 5-amino-6-(D-ribitylamino)uracil: step 1/2. In terms of biological role, catalyzes the formation of 6,7-dimethyl-8-ribityllumazine by condensation of 5-amino-6-(D-ribitylamino)uracil with 3,4-dihydroxy-2-butanone 4-phosphate. This is the penultimate step in the biosynthesis of riboflavin. The polypeptide is 6,7-dimethyl-8-ribityllumazine synthase (Neisseria gonorrhoeae (strain ATCC 700825 / FA 1090)).